A 125-amino-acid polypeptide reads, in one-letter code: Prefoldin subunit beta (125 aa).

This sequence belongs to the prefoldin subunit beta family. As to quaternary structure, heterohexamer of two alpha and four beta subunits.

It is found in the cytoplasm. In terms of biological role, molecular chaperone capable of stabilizing a range of proteins. Seems to fulfill an ATP-independent, HSP70-like function in archaeal de novo protein folding. This chain is Prefoldin subunit beta (pfdB), found in Sulfurisphaera tokodaii (strain DSM 16993 / JCM 10545 / NBRC 100140 / 7) (Sulfolobus tokodaii).